A 320-amino-acid chain; its full sequence is MRNINTYDWMKKWMTRSISILVMIHMITRTSISNAYPIFAQQGYENPREATGRIVCANCHLAKKPVNIEVPQSVLPDTVFEAVVQIPCDMQIKQVLANGKKGALNVGAVLILPEGFELAPPDRISPEIKEKIGNLYFQNYRPNQKEILVIGPVPGQKYSEIVFPILSPNPATNKEVHFLKYPIYVGGNRGRGQIYPDGSKSNNTVYNASTTGRVSKILRKEKGGYEITIDNASDGRQVVDIVPPGPELLISEGEFIKVDQPLTNNPNVGGFGQGDAEIVLQDPLRVQGLLLLLASVILAQIFLVLKKKQFEKVQLAEMNF.

The first 35 residues, 1–35, serve as a signal peptide directing secretion; sequence MRNINTYDWMKKWMTRSISILVMIHMITRTSISNA. Heme is bound by residues Y36, C56, C59, and H60. The chain crosses the membrane as a helical span at residues 286–306; it reads VQGLLLLLASVILAQIFLVLK.

It belongs to the cytochrome f family. The 4 large subunits of the cytochrome b6-f complex are cytochrome b6, subunit IV (17 kDa polypeptide, petD), cytochrome f and the Rieske protein, while the 4 small subunits are PetG, PetL, PetM and PetN. The complex functions as a dimer. Heme is required as a cofactor.

The protein resides in the plastid. The protein localises to the chloroplast thylakoid membrane. Component of the cytochrome b6-f complex, which mediates electron transfer between photosystem II (PSII) and photosystem I (PSI), cyclic electron flow around PSI, and state transitions. In Cycas taitungensis (Prince sago), this protein is Cytochrome f.